The chain runs to 158 residues: Curculin-2 (158 aa).

The first 22 residues, 1–22 (MAAKFLLTILVTFAAVASLGMA), serve as a signal peptide directing secretion. Positions 23–131 (DSVLLSGQTL…VLWPLGLNGC (109 aa)) constitute a Bulb-type lectin domain. Residues cysteine 51 and cysteine 74 are joined by a disulfide bond. N-linked (GlcNAc...) asparagine glycosylation is present at asparagine 103. A propeptide spanning residues 136-158 (GEITVAKDSTEPQHEDIKMVINN) is cleaved from the precursor.

Heterodimer with curculin-1; Disulfide-linked.

Its function is as follows. Taste-modifying protein; sweet-tasting. After curculin, water elicits a sweet taste, and sour substances induce a stronger sense of sweetness. In Molineria latifolia (Lumbah), this protein is Curculin-2.